The primary structure comprises 482 residues: tRNA sulfurtransferase (482 aa).

One can recognise a THUMP domain in the interval 61–165 (DQILAILMQT…YDHLHQVLHR (105 aa)). ATP is bound by residues 183-184 (LI), Lys-265, Gly-287, and Gln-296. Cys-344 and Cys-456 are disulfide-bonded. The Rhodanese domain maps to 404–482 (IGDGAIVLDI…GYGNIKVYRP (79 aa)). Cys-456 (cysteine persulfide intermediate) is an active-site residue.

It belongs to the ThiI family.

Its subcellular location is the cytoplasm. The catalysed reaction is [ThiI sulfur-carrier protein]-S-sulfanyl-L-cysteine + a uridine in tRNA + 2 reduced [2Fe-2S]-[ferredoxin] + ATP + H(+) = [ThiI sulfur-carrier protein]-L-cysteine + a 4-thiouridine in tRNA + 2 oxidized [2Fe-2S]-[ferredoxin] + AMP + diphosphate. It carries out the reaction [ThiS sulfur-carrier protein]-C-terminal Gly-Gly-AMP + S-sulfanyl-L-cysteinyl-[cysteine desulfurase] + AH2 = [ThiS sulfur-carrier protein]-C-terminal-Gly-aminoethanethioate + L-cysteinyl-[cysteine desulfurase] + A + AMP + 2 H(+). The protein operates within cofactor biosynthesis; thiamine diphosphate biosynthesis. Functionally, catalyzes the ATP-dependent transfer of a sulfur to tRNA to produce 4-thiouridine in position 8 of tRNAs, which functions as a near-UV photosensor. Also catalyzes the transfer of sulfur to the sulfur carrier protein ThiS, forming ThiS-thiocarboxylate. This is a step in the synthesis of thiazole, in the thiamine biosynthesis pathway. The sulfur is donated as persulfide by IscS. This chain is tRNA sulfurtransferase, found in Photobacterium profundum (strain SS9).